Here is a 420-residue protein sequence, read N- to C-terminus: Glutamyl-tRNA reductase (420 aa).

Substrate-binding positions include 49 to 52 (TCNR), Ser-109, 114 to 116 (EPQ), and Gln-120. Cys-50 serves as the catalytic Nucleophile. 189–194 (GAGETI) contacts NADP(+).

Belongs to the glutamyl-tRNA reductase family. In terms of assembly, homodimer.

It carries out the reaction (S)-4-amino-5-oxopentanoate + tRNA(Glu) + NADP(+) = L-glutamyl-tRNA(Glu) + NADPH + H(+). The protein operates within porphyrin-containing compound metabolism; protoporphyrin-IX biosynthesis; 5-aminolevulinate from L-glutamyl-tRNA(Glu): step 1/2. In terms of biological role, catalyzes the NADPH-dependent reduction of glutamyl-tRNA(Glu) to glutamate 1-semialdehyde (GSA). The polypeptide is Glutamyl-tRNA reductase (Proteus mirabilis (strain HI4320)).